The primary structure comprises 380 residues: 3-dehydroquinate synthase (380 aa).

The protein belongs to the archaeal-type DHQ synthase family.

The catalysed reaction is 2-amino-2,3,7-trideoxy-D-lyxo-hept-6-ulosonate + NAD(+) + H2O = 3-dehydroquinate + NH4(+) + NADH + H(+). Its function is as follows. Catalyzes the oxidative deamination and cyclization of 2-amino-3,7-dideoxy-D-threo-hept-6-ulosonic acid (ADH) to yield 3-dehydroquinate (DHQ), which is fed into the canonical shikimic pathway of aromatic amino acid biosynthesis. This Methanosarcina mazei (strain ATCC BAA-159 / DSM 3647 / Goe1 / Go1 / JCM 11833 / OCM 88) (Methanosarcina frisia) protein is 3-dehydroquinate synthase.